A 77-amino-acid chain; its full sequence is Oxyopinin-4a (77 aa).

Residues 1 to 20 (MKISQVFIFVFLLMISVAWA) form the signal peptide. Residues 21-47 (NEAYEEESNYLSERFDADVEEITPEFR) constitute a propeptide that is removed on maturation. Cysteine 51 and cysteine 57 are joined by a disulfide.

Expressed by the venom gland.

The protein resides in the secreted. It localises to the target cell membrane. Disrupts cell membranes through the formation of pores. Has antibacterial activity against Gram-positive bacteria S.aureus (MIC=10 uM) and B.subtilis (MIC=0.5 uM) as well as Gram-negative bacteria P.fluorescens (MIC=1 uM) and E.coli (MIC=0.5 uM). Has hemolytic activity against human erythrocytes (EC(50)=7 uM). This chain is Oxyopinin-4a, found in Oxyopes takobius (Lynx spider).